We begin with the raw amino-acid sequence, 260 residues long: Small ribosomal subunit protein uS2 (260 aa).

It belongs to the universal ribosomal protein uS2 family.

The chain is Small ribosomal subunit protein uS2 from Roseobacter denitrificans (strain ATCC 33942 / OCh 114) (Erythrobacter sp. (strain OCh 114)).